We begin with the raw amino-acid sequence, 335 residues long: Vitamin B12 import system permease protein BtuC (335 aa).

8 helical membrane-spanning segments follow: residues leucine 25–tryptophan 45, methionine 67–phenylalanine 87, proline 94–leucine 113, leucine 117–leucine 139, leucine 153–phenylalanine 173, valine 243–isoleucine 263, arginine 281–alanine 301, and glutamate 309–isoleucine 329.

Belongs to the binding-protein-dependent transport system permease family. FecCD subfamily. As to quaternary structure, the complex is composed of two ATP-binding proteins (BtuD), two transmembrane proteins (BtuC) and a solute-binding protein (BtuF).

It is found in the cell inner membrane. Functionally, part of the ABC transporter complex BtuCDF involved in vitamin B12 import. Involved in the translocation of the substrate across the membrane. In Yersinia pseudotuberculosis serotype O:1b (strain IP 31758), this protein is Vitamin B12 import system permease protein BtuC.